The sequence spans 313 residues: Ribosomal RNA small subunit methyltransferase H (313 aa).

Residues 48–50 (GGH), aspartate 68, phenylalanine 102, aspartate 120, and glutamine 127 contribute to the S-adenosyl-L-methionine site. A disordered region spans residues 290 to 313 (TATEEEIDRNPRSRSAKLRAAARK). Basic residues predominate over residues 301–313 (RSRSAKLRAAARK).

This sequence belongs to the methyltransferase superfamily. RsmH family.

It localises to the cytoplasm. It carries out the reaction cytidine(1402) in 16S rRNA + S-adenosyl-L-methionine = N(4)-methylcytidine(1402) in 16S rRNA + S-adenosyl-L-homocysteine + H(+). In terms of biological role, specifically methylates the N4 position of cytidine in position 1402 (C1402) of 16S rRNA. In Koribacter versatilis (strain Ellin345), this protein is Ribosomal RNA small subunit methyltransferase H.